The primary structure comprises 343 residues: N-acetyl-gamma-glutamyl-phosphate reductase (343 aa).

C148 is a catalytic residue.

This sequence belongs to the NAGSA dehydrogenase family. Type 1 subfamily.

It is found in the cytoplasm. The catalysed reaction is N-acetyl-L-glutamate 5-semialdehyde + phosphate + NADP(+) = N-acetyl-L-glutamyl 5-phosphate + NADPH + H(+). Its pathway is amino-acid biosynthesis; L-arginine biosynthesis; N(2)-acetyl-L-ornithine from L-glutamate: step 3/4. Functionally, catalyzes the NADPH-dependent reduction of N-acetyl-5-glutamyl phosphate to yield N-acetyl-L-glutamate 5-semialdehyde. The chain is N-acetyl-gamma-glutamyl-phosphate reductase from Caldicellulosiruptor saccharolyticus (strain ATCC 43494 / DSM 8903 / Tp8T 6331).